Reading from the N-terminus, the 128-residue chain is Large ribosomal subunit protein mL51 (128 aa).

Residues 1 to 31 (MAGSVPWAASRRLWGWVPSACRSFSLGVPRL) constitute a mitochondrion transit peptide.

It belongs to the mitochondrion-specific ribosomal protein mL51 family. In terms of assembly, component of the mitochondrial ribosome large subunit (39S) which comprises a 16S rRNA and about 50 distinct proteins. Interacts with OXA1L.

The protein localises to the mitochondrion. The polypeptide is Large ribosomal subunit protein mL51 (Mrpl51) (Mus musculus (Mouse)).